The following is a 442-amino-acid chain: Radical S-adenosyl methionine domain-containing protein 1, mitochondrial (442 aa).

The transit peptide at 1–17 (MVPSGVRTGRWVAAARA) directs the protein to the mitochondrion. Positions 34 to 270 (ESASTRAALY…RTVLRDAGFR (237 aa)) constitute a Radical SAM core domain. Tyr43 contacts S-adenosyl-L-methionine. Positions 49, 53, and 56 each coordinate [4Fe-4S] cluster. S-adenosyl-L-methionine-binding positions include Gly98, 99-100 (GT), Glu131, Gln158, Arg170, and Asp195.

The protein belongs to the anaerobic coproporphyrinogen-III oxidase family. HemW subfamily. [4Fe-4S] cluster is required as a cofactor.

It is found in the mitochondrion. In terms of biological role, may be a heme chaperone, appears to bind heme. Homologous bacterial proteins do not have oxygen-independent coproporphyrinogen-III oxidase activity. Binds 1 [4Fe-4S] cluster. The cluster is coordinated with 3 cysteines and an exchangeable S-adenosyl-L-methionine. This chain is Radical S-adenosyl methionine domain-containing protein 1, mitochondrial (Rsad1), found in Mus musculus (Mouse).